The primary structure comprises 434 residues: Serine--tRNA ligase (434 aa).

Residue 237 to 239 (TAE) participates in L-serine binding. Position 268–270 (268–270 (RAE)) interacts with ATP. Glu-291 contributes to the L-serine binding site. 358–361 (EISS) serves as a coordination point for ATP. Ser-393 serves as a coordination point for L-serine.

The protein belongs to the class-II aminoacyl-tRNA synthetase family. Type-1 seryl-tRNA synthetase subfamily. In terms of assembly, homodimer. The tRNA molecule binds across the dimer.

It is found in the cytoplasm. The catalysed reaction is tRNA(Ser) + L-serine + ATP = L-seryl-tRNA(Ser) + AMP + diphosphate + H(+). It carries out the reaction tRNA(Sec) + L-serine + ATP = L-seryl-tRNA(Sec) + AMP + diphosphate + H(+). It participates in aminoacyl-tRNA biosynthesis; selenocysteinyl-tRNA(Sec) biosynthesis; L-seryl-tRNA(Sec) from L-serine and tRNA(Sec): step 1/1. Functionally, catalyzes the attachment of serine to tRNA(Ser). Is also able to aminoacylate tRNA(Sec) with serine, to form the misacylated tRNA L-seryl-tRNA(Sec), which will be further converted into selenocysteinyl-tRNA(Sec). The protein is Serine--tRNA ligase of Rhodopseudomonas palustris (strain ATCC BAA-98 / CGA009).